Here is an 888-residue protein sequence, read N- to C-terminus: DNA mismatch repair protein MutS (888 aa).

An ATP-binding site is contributed by 641-648 (GPNMAGKS).

The protein belongs to the DNA mismatch repair MutS family.

This protein is involved in the repair of mismatches in DNA. It is possible that it carries out the mismatch recognition step. This protein has a weak ATPase activity. This is DNA mismatch repair protein MutS from Rickettsia bellii (strain OSU 85-389).